The sequence spans 356 residues: Tyrosine recombinase XerS (356 aa).

Residues 16–121 (IMPWYVLDYY…ALSSLYKYLT (106 aa)) form the Core-binding (CB) domain. The region spanning 169-354 (AFLDYVDKEY…VNDEQKNALD (186 aa)) is the Tyr recombinase domain. Residues R210, K234, H306, R309, and H332 contribute to the active site. Y341 functions as the O-(3'-phospho-DNA)-tyrosine intermediate in the catalytic mechanism.

This sequence belongs to the 'phage' integrase family. XerS subfamily.

It localises to the cytoplasm. With respect to regulation, ftsK is required for recombination. Its function is as follows. Site-specific tyrosine recombinase, which acts by catalyzing the cutting and rejoining of the recombining DNA molecules. Essential to convert dimers of the bacterial chromosome into monomers to permit their segregation at cell division. This chain is Tyrosine recombinase XerS, found in Streptococcus pyogenes serotype M18 (strain MGAS8232).